A 390-amino-acid chain; its full sequence is S-adenosylmethionine synthase 4 (390 aa).

A Mg(2+)-binding site is contributed by glutamate 9. Histidine 15 serves as a coordination point for ATP. Glutamate 43 serves as a coordination point for K(+). L-methionine is bound by residues glutamate 56 and glutamine 99. Residues 167–169 (DGK), 235–238 (SGRF), aspartate 246, 252–253 (RK), alanine 269, lysine 273, and lysine 277 each bind ATP. Aspartate 246 is a binding site for L-methionine. L-methionine is bound at residue lysine 277.

Belongs to the AdoMet synthase family. In terms of assembly, homotetramer. The cofactor is Mn(2+). Mg(2+) serves as cofactor. Requires Co(2+) as cofactor. It depends on K(+) as a cofactor.

It localises to the cytoplasm. It carries out the reaction L-methionine + ATP + H2O = S-adenosyl-L-methionine + phosphate + diphosphate. Its pathway is amino-acid biosynthesis; S-adenosyl-L-methionine biosynthesis; S-adenosyl-L-methionine from L-methionine: step 1/1. In terms of biological role, catalyzes the formation of S-adenosylmethionine from methionine and ATP. The reaction comprises two steps that are both catalyzed by the same enzyme: formation of S-adenosylmethionine (AdoMet) and triphosphate, and subsequent hydrolysis of the triphosphate. This chain is S-adenosylmethionine synthase 4 (METK4), found in Populus trichocarpa (Western balsam poplar).